The sequence spans 243 residues: uncharacterized protein (243 aa).

The signal sequence occupies residues 1–16 (MKHFIILFLLLFVTAG). A lipid anchor (N-palmitoyl cysteine) is attached at cysteine 17. Cysteine 17 carries S-diacylglycerol cysteine lipidation.

The protein localises to the cell membrane. This is an uncharacterized protein from Bacillus subtilis (strain 168).